The chain runs to 1726 residues: MSDFVESEAEESEEEYNHEGEVVPRVTKKFVEEEDDDEEEEEENLDDQDERGNLKDFINDDDDEEEGEEDEGSDSGDSEDDVGHKKRKRPSFDDRLEDDDFDLIEENLGVKVKRGQKYRRVKKMSDDDEDDEEEYGKEEHEKEAIAGEIFQDEEGEEGQEAVEAPMAPPDEEEEDDEESDIDDFIVDDDGQPLKKPKWRKKLPGYTDAALQEAQEIFGVDFDYDEFEKYNEYDEELEEDYEYEDDETEGEIRVRPKKTTKKRVSRRSIFEMYEPSELESSHLTDQDNEIRATDLPERFQLRSIPVKAAEDDELEEEADWIYRNAFATPTISLQDSCDYLDRGQPTSSFSRKGPSTVQKIKEALGFMRNQHFEVPFIAFYRKEYVEPELHINDLWRVWQWDEKWTQLRIRKENLTRLFEKMQAYQYEQISADPDKPLADGIRALDTTDMERLKDVQSMDELKDVYNHFLLYYGRDIPKMQNAAKASRKKLKRIKEDGDEEGEGEEAEDEEQRGPELKQASRRDMYTICQSAGLDGLAKKFGLTPEQFGENLRDSYQRHETEQFPAEPLELAKDYVCSQFPTPEAVLEGARYMVALQIAREPLVRQVLRQTFQERAKLNITPTKKGRKDVDEAHYAYSFKYLKNKPVKELRDDQFLKIGLAEDEGLLTIDISIDMKGVEGYGNDQTYFEEIKQFYYRDEFSHQVQEWNRQRTMAIERALQQFLYVQMAKELKNKLLAEARESVVKACSRKLYNWLRVAPYRPDQQVEEDDDFMDENQGKGIRVLGIAFSSARDHPVFCALVNGEGEVTDFLRLPHFTKRRTAWREEEREKKAQDIETLKKFLVNKKPHVVTIAGENRDAQMLTEDVKRIVHELDQGQQLSSIGVELVDNELAILYMNSKKSEAEFRDYPPVLRQAVSLARRIQDPLIEFAQVCSSDEDILCLKFHPLQEHVVKEELLNALYCEFINRVNEVGVDVNRAIAHPYSQALIQYVCGLGPRKGTHLLKILKQNNTRLESRTQLVTMCHMGPKVFMNCAGFLKIDTASLGDSTDSYIEVLDGSRVHPETYEWARKMAVDALEYDESAEDANPAGALEEILENPERLKDLDLDAFAEELERQGYGDKHITLYDIRAELSCRYKDLRTAYRSPNTEEIFNMLTKETPETFYIGKLIICNVTGIAHRRPQGESYDQAIRNDETGLWQCPFCQQDNFPELSEVWNHFDSGSCPGQAIGVKTRLDNGVTGFIPTKFLSDKVVKRPEERVKVGMTVHCRIMKIDIEKFSADLTCRTSDLMDRNNEWKLPKDTYYDFDAEAADHKQEEDMKRKQQRTTYIKRVIAHPSFHNINFKQAEKMMETMDQGDVIIRPSSKGENHLTVTWKVSAGIYQHVDVREEGKENAFSLGATLWINSEEFEDLDEIVARYVQPMASFARDLLNHKYYQDCSGGDRKKLEELLIKTKKEKPTFIPYFICACKELPGKFLLGYQPRGKPRIEYVTVTPEGFRYRGQIFPTVNGLFRWFKDHYQDPVPGITPSSSNRTRTPASINATPANINLADLTRAVNALPQNMTSQMFSAIAAVTGQGQNPNATPAQWASSQYGYGGSGGGSSAYHVFPTPAQQPVATPLMTPSYSYTTPSQPITTPQYHQLQASTTPQSTQAQPQPSSSSRQRQQQPKSNSHAAIDWGKMAEQWLQEKEAERRKQKQRLTPRPSPSPMIESTPMSIAGDATPLLDEMDR.

3 stretches are compositionally biased toward acidic residues: residues methionine 1–glutamate 14, glutamate 32–aspartate 49, and asparagine 59–aspartate 80. Residues methionine 1–lysine 197 form a disordered region. Residue serine 2 is modified to N-acetylserine. Residues serine 2 to serine 485 are interaction with IWS1. Residues serine 2–leucine 916 are interaction with PAAF1. Residues aspartate 3 to arginine 51 are a coiled coil. Phosphoserine occurs at positions 7 and 12. Residues serine 73, serine 78, and serine 91 each carry the phosphoserine modification. A compositionally biased stretch (acidic residues) spans arginine 95–glutamate 105. A compositionally biased stretch (basic residues) spans lysine 111–lysine 122. Position 125 is a phosphoserine (serine 125). Composition is skewed to acidic residues over residues aspartate 126 to glycine 136, phenylalanine 150 to glutamate 160, and proline 169 to glycine 190. Serine 267 is modified (phosphoserine). The segment at alanine 317 to tyrosine 1300 is interaction with KDM6A. A disordered region spans residues leucine 489–arginine 520. A compositionally biased stretch (acidic residues) spans aspartate 495–glutamate 509. Residues glutamine 510 to arginine 520 are compositionally biased toward basic and acidic residues. Lysine 743 is modified (N6-acetyllysine). The S1 motif domain maps to tryptophan 1213–arginine 1282. The SH2 domain occupies tyrosine 1325 to tyrosine 1431. At tyrosine 1515 the chain carries Phosphotyrosine. Threonine 1523 bears the Phosphothreonine mark. Phosphoserine is present on serine 1526. Phosphothreonine occurs at positions 1530 and 1532. Serine 1535 is modified (phosphoserine). Residue threonine 1539 is modified to Phosphothreonine. Residues proline 1633–arginine 1726 are interaction with histone H2B and H3. Residues histidine 1636–arginine 1726 are disordered. A compositionally biased stretch (low complexity) spans glutamine 1639–proline 1664. Lysine 1676 carries the N6-acetyllysine modification. Threonine 1697 carries the phosphothreonine modification. Phosphoserine is present on residues serine 1701 and serine 1703. A phosphothreonine mark is found at threonine 1709 and threonine 1718.

This sequence belongs to the SPT6 family. As to quaternary structure, interacts with RNA polymerase II and the DRB sensitivity-inducing factor complex (DSIF complex), which is composed of SUPT5H and SUPT4H1 or SUPT4H2. Interacts with PAAF1. Interacts with histone H2B and H3. Interacts (via SH2 domain) with POLR2A phosphorylated at 'Ser-2'. Interacts (via SH2 domain) with SETD1A. Interacts with IWS1, KDM6A and AICDA. Interacts with WDR43. Post-translationally, dephosphorylated at Ser-1530 by the PNUTS-PP1 complex during RNA polymerase II transcription pause-release. Ubiquitously expressed.

The protein resides in the nucleus. Its function is as follows. Histone H3-H4 chaperone that plays a key role in the regulation of transcription elongation and mRNA processing. Enhances the transcription elongation by RNA polymerase II (RNAPII) and is also required for the efficient activation of transcriptional elongation by the HIV-1 nuclear transcriptional activator, Tat. Besides chaperoning histones in transcription, acts to transport and splice mRNA by forming a complex with IWS1 and the C-terminal domain (CTD) of the RNAPII subunit RPB1 (POLR2A). The SUPT6H:IWS1:CTD complex recruits mRNA export factors (ALYREF/THOC4, EXOSC10) as well as histone modifying enzymes (such as SETD2), to ensure proper mRNA splicing, efficient mRNA export and elongation-coupled H3K36 methylation, a signature chromatin mark of active transcription. SUPT6H via its association with SETD1A, regulates both class-switch recombination and somatic hypermutation through formation of H3K4me3 epigenetic marks on activation-induced cytidine deaminase (AICDA) target loci. Promotes the activation of the myogenic gene program by entailing erasure of the repressive H3K27me3 epigenetic mark through stabilization of the chromatin interaction of the H3K27 demethylase KDM6A. The chain is Transcription elongation factor SPT6 (Supt6h) from Mus musculus (Mouse).